Consider the following 239-residue polypeptide: Protein-S-isoprenylcysteine O-methyltransferase (239 aa).

At 1 to 23 (MHQDFQEDEHEYPDIRRNPLHEV) the chain is on the cytoplasmic side. The helical transmembrane segment at 24-44 (TMTSYILGILLGIFVGLFPQI) threads the bilayer. Topologically, residues 45–47 (RFK) are lumenal. Residues 48–68 (NFNLFIIALSLFHFLEYYITA) form a helical membrane-spanning segment. Over 69–88 (KYNPLKVHSESFLLNNGKSY) the chain is Cytoplasmic. A helical transmembrane segment spans residues 89–109 (MAAHSFAILECLVESFLFPDL). Residue lysine 110 is a topological domain, lumenal. A helical transmembrane segment spans residues 111-131 (IFSYSLATKLCTVLGCLLVIL). Over 132–175 (GQYTRTIAMHTAGHSFSHIVKTKKESDHVLVKTGVYSWSRHPSY) the chain is Cytoplasmic. S-adenosyl-L-methionine is bound by residues 159–162 (HVLV), tyrosine 167, and 172–175 (HPSY). Residues 176–206 (LGFFWWAIGTQLLLLNPLSLVIFIFVLWKFF) constitute an intramembrane region (helical). The Cytoplasmic segment spans residues 207–239 (SDRIRVEEKYLIEFFSAEYIEYKNKVGVGIPFI). Arginine 209 provides a ligand contact to substrate. Glutamate 213 is a binding site for S-adenosyl-L-methionine.

It belongs to the class VI-like SAM-binding methyltransferase superfamily. Isoprenylcysteine carboxyl methyltransferase family.

The protein resides in the endoplasmic reticulum membrane. It catalyses the reaction [protein]-C-terminal S-[(2E,6E)-farnesyl]-L-cysteine + S-adenosyl-L-methionine = [protein]-C-terminal S-[(2E,6E)-farnesyl]-L-cysteine methyl ester + S-adenosyl-L-homocysteine. Its function is as follows. Mediates C-terminal methylation of the isoprenylated C-terminal cysteine in A-factor mating pheromone and Ras proteins. Does not have a preference for the farnesyl or geranylgeranyl moieties in the model substrates N-acetyl-S-farnesyl-L-cysteine (AFC) and N-acetyl-S-geranylgeranyl-L-cysteine (AGGC) in vitro. This Saccharomyces cerevisiae (strain ATCC 204508 / S288c) (Baker's yeast) protein is Protein-S-isoprenylcysteine O-methyltransferase (STE14).